The chain runs to 801 residues: 1-phosphatidylinositol 4,5-bisphosphate phosphodiesterase (801 aa).

An EF-hand domain is found at 206 to 241 (TSDAVLHNLMKFSDSNSDYHLDFSEFSNLLKLLRSH). One can recognise a PI-PLC X-box domain in the interval 322-464 (QDTSKPLSYY…SLKYKILLKG (143 aa)). Active-site residues include H337 and H382. Substrate is bound at residue K463. A compositionally biased stretch (low complexity) spans 471 to 485 (VSAVGNSSASSSQSN). Positions 471-523 (VSAVGNSSASSSQSNIQTDDNDDDGAVDLTEYDEVDDRSASSSSSSFSLSFGS) are disordered. Over residues 489 to 506 (DDNDDDGAVDLTEYDEVD) the composition is skewed to acidic residues. 4 residues coordinate Ca(2+): D490, D492, D494, and E501. The span at 510–523 (ASSSSSSFSLSFGS) shows a compositional bias: low complexity. The residue at position 524 (S524) is a Phosphoserine. The residue at position 531 (T531) is a Phosphothreonine; by PKA and PKG. Positions 542 to 652 (LIYLVSHGFK…CGYVLKPPCL (111 aa)) constitute a PI-PLC Y-box domain. Substrate-binding residues include S566 and R593. Residues 656 to 781 (ECETYDPTSP…RPGYRILKLK (126 aa)) form the C2 domain.

The catalysed reaction is a 1,2-diacyl-sn-glycero-3-phospho-(1D-myo-inositol-4,5-bisphosphate) + H2O = 1D-myo-inositol 1,4,5-trisphosphate + a 1,2-diacyl-sn-glycerol + H(+). Its function is as follows. The production of the second messenger molecules diacylglycerol (DAG) and inositol 1,4,5-trisphosphate (IP3) is mediated by activated phosphatidylinositol-specific phospholipase C enzymes. The protein is 1-phosphatidylinositol 4,5-bisphosphate phosphodiesterase (plc) of Dictyostelium discoideum (Social amoeba).